The primary structure comprises 131 residues: Profilin-1 (131 aa).

This sequence belongs to the profilin family. As to quaternary structure, occurs in many kinds of cells as a complex with monomeric actin in a 1:1 ratio.

The protein localises to the cytoplasm. The protein resides in the cytoskeleton. In terms of biological role, binds to actin and affects the structure of the cytoskeleton. At high concentrations, profilin prevents the polymerization of actin, whereas it enhances it at low concentrations. By binding to PIP2, it inhibits the formation of IP3 and DG. In Ricinus communis (Castor bean), this protein is Profilin-1 (PRO1).